A 684-amino-acid chain; its full sequence is Glycine--tRNA ligase beta subunit (684 aa).

It belongs to the class-II aminoacyl-tRNA synthetase family. As to quaternary structure, tetramer of two alpha and two beta subunits.

It localises to the cytoplasm. It catalyses the reaction tRNA(Gly) + glycine + ATP = glycyl-tRNA(Gly) + AMP + diphosphate. The sequence is that of Glycine--tRNA ligase beta subunit from Pseudomonas syringae pv. syringae (strain B728a).